The sequence spans 73 residues: Biotin/lipoyl attachment protein (73 aa).

Residues 2-69 (TVSIQMAGNL…NEGDVLLELS (68 aa)) enclose the Biotinyl-binding domain. Residue lysine 35 is modified to N6-biotinyllysine; alternate. At lysine 35 the chain carries N6-lipoyllysine; alternate.

Can be both biotinylated and lipoylated on Lys-35 upon overexpression in E.coli depending on the growth medium; the nature of the modification in situ in B.subtilis is unknown.

The chain is Biotin/lipoyl attachment protein (yngHB) from Bacillus subtilis (strain 168).